The sequence spans 332 residues: CXADR-like membrane protein (332 aa).

The signal sequence occupies residues 1–19 (MHTLIRSFLGLWYVLGALA). Ig-like C2-type domains lie at 20–123 (QTEI…SFIT) and 130–220 (PSEL…VDVT). Residues 20–231 (QTEIKLVADE…QSVSNTGILA (212 aa)) are Extracellular-facing. Disulfide bonds link C35/C109 and C151/C204. Residue N193 is glycosylated (N-linked (GlcNAc...) asparagine). A helical transmembrane segment spans residues 232–252 (GVACGVVVGVFLIFFTVWLLF). Over 253-332 (HKKEFKKREE…EQRHHCLEKI (80 aa)) the chain is Cytoplasmic. The disordered stretch occupies residues 276 to 332 (PKARLVKPGSSSSDSRSSQSGSSSTRSTTNSASRSQRTHSTQETPHGEQRHHCLEKI). A compositionally biased stretch (low complexity) spans 285–310 (SSSSDSRSSQSGSSSTRSTTNSASRS). The span at 320–332 (PHGEQRHHCLEKI) shows a compositional bias: basic and acidic residues.

The protein resides in the cell junction. It localises to the tight junction. It is found in the cell membrane. In Xenopus tropicalis (Western clawed frog), this protein is CXADR-like membrane protein (clmp).